We begin with the raw amino-acid sequence, 174 residues long: RNA pyrophosphohydrolase (174 aa).

Positions 6–149 constitute a Nudix hydrolase domain; sequence GYRPNVGIIL…KRDVYLGALK (144 aa). A Nudix box motif is present at residues 38–59; that stretch reads GGIKPGESPETAMYRELYEEVG.

This sequence belongs to the Nudix hydrolase family. RppH subfamily. The cofactor is a divalent metal cation.

Its function is as follows. Accelerates the degradation of transcripts by removing pyrophosphate from the 5'-end of triphosphorylated RNA, leading to a more labile monophosphorylated state that can stimulate subsequent ribonuclease cleavage. In Neisseria meningitidis serogroup B (strain ATCC BAA-335 / MC58), this protein is RNA pyrophosphohydrolase.